Here is a 165-residue protein sequence, read N- to C-terminus: Lipoprotein signal peptidase (165 aa).

4 helical membrane passes run 11–31, 41–61, 64–84, and 92–112; these read YWVL…AVLS, VIPS…FSFL, QGGW…AYLV, and FATL…GNVI. Catalysis depends on residues Asp-122 and Asp-140. Residues 132 to 152 form a helical membrane-spanning segment; that stretch reads FYPAFNIADSFICVGAVLAVL.

It belongs to the peptidase A8 family.

It localises to the cell inner membrane. The enzyme catalyses Release of signal peptides from bacterial membrane prolipoproteins. Hydrolyzes -Xaa-Yaa-Zaa-|-(S,diacylglyceryl)Cys-, in which Xaa is hydrophobic (preferably Leu), and Yaa (Ala or Ser) and Zaa (Gly or Ala) have small, neutral side chains.. It participates in protein modification; lipoprotein biosynthesis (signal peptide cleavage). Its function is as follows. This protein specifically catalyzes the removal of signal peptides from prolipoproteins. This is Lipoprotein signal peptidase from Neisseria meningitidis serogroup A / serotype 4A (strain DSM 15465 / Z2491).